Consider the following 105-residue polypeptide: Pyrimidine/purine nucleoside phosphorylase (105 aa).

The protein belongs to the nucleoside phosphorylase PpnP family.

It carries out the reaction a purine D-ribonucleoside + phosphate = a purine nucleobase + alpha-D-ribose 1-phosphate. It catalyses the reaction adenosine + phosphate = alpha-D-ribose 1-phosphate + adenine. The enzyme catalyses cytidine + phosphate = cytosine + alpha-D-ribose 1-phosphate. The catalysed reaction is guanosine + phosphate = alpha-D-ribose 1-phosphate + guanine. It carries out the reaction inosine + phosphate = alpha-D-ribose 1-phosphate + hypoxanthine. It catalyses the reaction thymidine + phosphate = 2-deoxy-alpha-D-ribose 1-phosphate + thymine. The enzyme catalyses uridine + phosphate = alpha-D-ribose 1-phosphate + uracil. The catalysed reaction is xanthosine + phosphate = alpha-D-ribose 1-phosphate + xanthine. Functionally, catalyzes the phosphorolysis of diverse nucleosides, yielding D-ribose 1-phosphate and the respective free bases. Can use uridine, adenosine, guanosine, cytidine, thymidine, inosine and xanthosine as substrates. Also catalyzes the reverse reactions. The polypeptide is Pyrimidine/purine nucleoside phosphorylase (Delftia acidovorans (strain DSM 14801 / SPH-1)).